Here is a 313-residue protein sequence, read N- to C-terminus: Porphobilinogen deaminase (313 aa).

S-(dipyrrolylmethanemethyl)cysteine is present on Cys242.

It belongs to the HMBS family. Monomer. Requires dipyrromethane as cofactor.

The enzyme catalyses 4 porphobilinogen + H2O = hydroxymethylbilane + 4 NH4(+). Its pathway is porphyrin-containing compound metabolism; protoporphyrin-IX biosynthesis; coproporphyrinogen-III from 5-aminolevulinate: step 2/4. Functionally, tetrapolymerization of the monopyrrole PBG into the hydroxymethylbilane pre-uroporphyrinogen in several discrete steps. In Klebsiella pneumoniae (strain 342), this protein is Porphobilinogen deaminase.